A 567-amino-acid polypeptide reads, in one-letter code: Mitochondrial distribution and morphology protein 34 (567 aa).

Positions M1–R224 constitute an SMP-LTD domain. Polar residues predominate over residues N392–A416. The disordered stretch occupies residues N392–I453. A compositionally biased stretch (low complexity) spans T417–S452.

Belongs to the MDM34 family. Component of the ER-mitochondria encounter structure (ERMES) or MDM complex, composed of MMM1, MDM10, MDM12 and MDM34.

The protein localises to the mitochondrion outer membrane. In terms of biological role, component of the ERMES/MDM complex, which serves as a molecular tether to connect the endoplasmic reticulum (ER) and mitochondria. Components of this complex are involved in the control of mitochondrial shape and protein biogenesis, and function in nonvesicular lipid trafficking between the ER and mitochondria. MDM34 is required for the interaction of the ER-resident membrane protein MMM1 and the outer mitochondrial membrane-resident beta-barrel protein MDM10. In Vanderwaltozyma polyspora (strain ATCC 22028 / DSM 70294 / BCRC 21397 / CBS 2163 / NBRC 10782 / NRRL Y-8283 / UCD 57-17) (Kluyveromyces polysporus), this protein is Mitochondrial distribution and morphology protein 34.